Consider the following 638-residue polypeptide: Threonine--tRNA ligase (638 aa).

Residues 1–62 form the TGS domain; that stretch reads MYQLTLPDKS…EKNSNIEVLT (62 aa). The catalytic stretch occupies residues 246–537; the sequence is DHRKIGKEMD…LIEHYEGKFP (292 aa). Residues Cys-337, His-388, and His-514 each coordinate Zn(2+).

This sequence belongs to the class-II aminoacyl-tRNA synthetase family. In terms of assembly, homodimer. The cofactor is Zn(2+).

Its subcellular location is the cytoplasm. The catalysed reaction is tRNA(Thr) + L-threonine + ATP = L-threonyl-tRNA(Thr) + AMP + diphosphate + H(+). Its function is as follows. Catalyzes the attachment of threonine to tRNA(Thr) in a two-step reaction: L-threonine is first activated by ATP to form Thr-AMP and then transferred to the acceptor end of tRNA(Thr). Also edits incorrectly charged L-seryl-tRNA(Thr). This chain is Threonine--tRNA ligase, found in Leptospira interrogans serogroup Icterohaemorrhagiae serovar copenhageni (strain Fiocruz L1-130).